A 245-amino-acid polypeptide reads, in one-letter code: Farnesol dehydrogenase (245 aa).

Residues 11 to 40 (VTGA…ARRV) and Asp64 contribute to the NAD(+) site. Residue Ser145 participates in substrate binding. Tyr160 (proton acceptor) is an active-site residue. Residue Lys164 participates in NAD(+) binding.

This sequence belongs to the short-chain dehydrogenases/reductases (SDR) family. As to quaternary structure, homodimer. Highly expressed level in the midgut and brain in adult females, and at lower level in the abdominal and thoracic ganglia. High levels are detected in corpora allata (CA), Malpighian tubules and fat body.

It catalyses the reaction (2E,6E)-farnesol + NADP(+) = (2E,6E)-farnesal + NADPH + H(+). Functionally, mediates oxidation of farnesol into farnesal, a precursor of juvenile hormone in the corpora allata (CA), the glands that synthesize juvenile hormone. Able to oxidize C(10) to C(15) isoprenoid and aliphatic alcohols. In Aedes aegypti (Yellowfever mosquito), this protein is Farnesol dehydrogenase.